Here is an 875-residue protein sequence, read N- to C-terminus: Ribonucleases P/MRP protein subunit POP1 (875 aa).

3 disordered regions span residues 1 to 20, 35 to 54, and 119 to 140; these read MSGS…KNQL, EAVA…SESG, and EMRK…RKAH. Positions 39–54 are enriched in polar residues; it reads ASSTKTGTPSDLSESG. Thr-524 is modified (phosphothreonine).

In terms of assembly, component of nuclear RNase P and RNase MRP complexes. RNase P consists of an RNA moiety and at least 9 protein subunits including POP1, POP3, POP4, POP5, POP6, POP7, POP8, RPP1 and RPR2. RNase MRP complex consists of an RNA moiety and at least 10 protein subunits including POP1, POP3, POP4, POP5, POP6, POP7, POP8, RMP1, RPP1 and SNM1, many of which are shared with the RNase P complex.

The protein resides in the cytoplasm. It localises to the nucleus. It catalyses the reaction Endonucleolytic cleavage of RNA, removing 5'-extranucleotides from tRNA precursor.. Functionally, required for processing of 5.8S rRNA (short form) at site A3 and for 5' and 3' processing of pre-tRNA. The chain is Ribonucleases P/MRP protein subunit POP1 (POP1) from Saccharomyces cerevisiae (strain ATCC 204508 / S288c) (Baker's yeast).